The primary structure comprises 563 residues: Eukaryotic translation initiation factor 3 subunit D-1 (563 aa).

The segment at V98 to S167 is disordered. Residues K100–N121 are compositionally biased toward basic residues. T128 carries the post-translational modification Phosphothreonine. Residues E291–P305 form an RNA gate region.

It belongs to the eIF-3 subunit D family. As to quaternary structure, component of the eukaryotic translation initiation factor 3 (eIF-3) complex. The eIF-3 complex interacts with pix.

It localises to the cytoplasm. Its function is as follows. mRNA cap-binding component of the eukaryotic translation initiation factor 3 (eIF-3) complex, which is involved in protein synthesis of a specialized repertoire of mRNAs and, together with other initiation factors, stimulates binding of mRNA and methionyl-tRNAi to the 40S ribosome. The eIF-3 complex specifically targets and initiates translation of a subset of mRNAs involved in cell proliferation. In the eIF-3 complex, eif3d specifically recognizes and binds the 7-methylguanosine cap of a subset of mRNAs. In Drosophila virilis (Fruit fly), this protein is Eukaryotic translation initiation factor 3 subunit D-1.